The sequence spans 1089 residues: Ankyrin repeat and IBR domain-containing protein 1 (1089 aa).

Glycine 2 carries N-myristoyl glycine lipidation. ANK repeat units lie at residues 45-74 (QHNTPLHYAARHGMNKILGTFLGRDGNPNK) and 144-173 (KKNTPLHYAAASGMKACVELLVKHGGDLFA). Positions 281-321 (CQRSGVQMPTPPPSGYNAWDTLPSPRTPRTTRSSVTSPDEI) are disordered. Over residues 303–318 (PSPRTPRTTRSSVTSP) the composition is skewed to low complexity. The tract at residues 329–569 (DTSLCDICMC…GGYYRCTRYE (241 aa)) is TRIAD supradomain. Zn(2+) is bound by residues cysteine 333, cysteine 336, cysteine 351, histidine 353, cysteine 356, cysteine 359, cysteine 378, cysteine 383, cysteine 465, cysteine 468, histidine 473, cysteine 478, cysteine 519, and cysteine 522. An RING-type 1 zinc finger spans residues 333–383 (CDICMCSISVFEDPVDMPCGHDFCRGCWESFLNLKIQEGEAHNIFCPAYDC). The IBR-type zinc finger occupies 401–478 (DKRYLQFDIK…LGEAHEPCDC (78 aa)). The RING-type 2; atypical zinc finger occupies 519 to 548 (CANCKSPIQKNEGCNHMQCAKCKYDFCWIC). Residue cysteine 532 is part of the active site. Zn(2+)-binding residues include cysteine 537, cysteine 540, cysteine 545, cysteine 548, histidine 555, and cysteine 565. A coiled-coil region spans residues 575–640 (EEQSKEMTVE…RALKETEGGC (66 aa)). Serine 737 carries the phosphoserine modification. A disordered region spans residues 776 to 821 (RRGDVHSLLSNPPDPDEPSESTLDIPEGGSSSRRPGTSVVSSASMS). The region spanning 851–870 (EDDPNILLAIQLSLQESGLA) is the UIM domain. Phosphoserine is present on residues serine 884 and serine 911. Disordered regions lie at residues 889–912 (GTSLPSRLDSVPRNTDSPRAALSS), 927–964 (AENDPFSTDTLSSHPLSEARSDFCPSSSDPDSAGQDPN), and 1026–1089 (DASV…VHLV). Polar residues-rich tracts occupy residues 931–941 (PFSTDTLSSHP) and 1070–1082 (DVSSQTPQTSSDW).

It belongs to the RBR family.

It carries out the reaction [E2 ubiquitin-conjugating enzyme]-S-ubiquitinyl-L-cysteine + [acceptor protein]-L-lysine = [E2 ubiquitin-conjugating enzyme]-L-cysteine + [acceptor protein]-N(6)-ubiquitinyl-L-lysine.. Might act as an E3 ubiquitin-protein ligase, or as part of E3 complex, which accepts ubiquitin from specific E2 ubiquitin-conjugating enzymes and then transfers it to substrates. In Homo sapiens (Human), this protein is Ankyrin repeat and IBR domain-containing protein 1 (ANKIB1).